A 206-amino-acid polypeptide reads, in one-letter code: 3-isopropylmalate dehydratase small subunit (206 aa).

The protein belongs to the LeuD family. LeuD type 1 subfamily. In terms of assembly, heterodimer of LeuC and LeuD.

The catalysed reaction is (2R,3S)-3-isopropylmalate = (2S)-2-isopropylmalate. The protein operates within amino-acid biosynthesis; L-leucine biosynthesis; L-leucine from 3-methyl-2-oxobutanoate: step 2/4. Functionally, catalyzes the isomerization between 2-isopropylmalate and 3-isopropylmalate, via the formation of 2-isopropylmaleate. The protein is 3-isopropylmalate dehydratase small subunit of Leptospira borgpetersenii serovar Hardjo-bovis (strain JB197).